The chain runs to 300 residues: Protoheme IX farnesyltransferase 1 (300 aa).

9 helical membrane passes run 28-48 (VVAL…PTIL), 54-74 (VAGL…NHLI), 100-120 (ALLF…VFTN), 122-142 (LTAW…TAYL), 149-169 (NIVI…TAVT), 176-196 (ALLL…ALAI), 222-242 (CILL…LVGM), 243-263 (SGPL…YKAW), and 280-300 (FSIY…YLWA).

It belongs to the UbiA prenyltransferase family. Protoheme IX farnesyltransferase subfamily.

Its subcellular location is the cell inner membrane. It carries out the reaction heme b + (2E,6E)-farnesyl diphosphate + H2O = Fe(II)-heme o + diphosphate. Its pathway is porphyrin-containing compound metabolism; heme O biosynthesis; heme O from protoheme: step 1/1. Functionally, converts heme B (protoheme IX) to heme O by substitution of the vinyl group on carbon 2 of heme B porphyrin ring with a hydroxyethyl farnesyl side group. The sequence is that of Protoheme IX farnesyltransferase 1 from Shewanella sp. (strain MR-4).